A 798-amino-acid polypeptide reads, in one-letter code: Integrin beta-1 (798 aa).

The first 20 residues, 1-20 (MNLQPIFWIGLISSICCVFA), serve as a signal peptide directing secretion. The PSI domain maps to 26-76 (RCLKANAKSCGECIQAGPNCGWCTNSTFLQEGMPTSARCDDLEALKKKGCP). Intrachain disulfides connect Cys27–Cys45, Cys35–Cys464, Cys38–Cys64, Cys48–Cys75, Cys207–Cys213, Cys261–Cys301, Cys401–Cys415, Cys435–Cys462, Cys466–Cys486, Cys477–Cys489, Cys491–Cys500, Cys502–Cys533, Cys516–Cys531, Cys525–Cys536, Cys538–Cys553, Cys555–Cys576, Cys560–Cys574, Cys568–Cys579, Cys581–Cys590, Cys592–Cys615, Cys599–Cys613, Cys607–Cys618, Cys620–Cys630, Cys633–Cys636, Cys640–Cys691, Cys646–Cys665, Cys649–Cys661, and Cys699–Cys723. N-linked (GlcNAc...) asparagine glycosylation is present at Asn50. Residues 75–107 (CPPDDIENPRGSKDIKKNKNVTNRSKGTAEKLK) form a disordered region. The span at 81–91 (ENPRGSKDIKK) shows a compositional bias: basic and acidic residues. Asn94 and Asn97 each carry an N-linked (GlcNAc...) asparagine glycan. The VWFA domain maps to 140–378 (DYPIDLYYLM…QLIIDAYNSL (239 aa)). Residues Ser152 and Ser154 each contribute to the Mg(2+) site. Ca(2+) is bound by residues Ser154, Asp157, Asp158, and Glu189. The tract at residues 207 to 213 (CTSEQNC) is CX3CL1-binding. N-linked (GlcNAc...) asparagine glycosylation is present at Asn212. Ca(2+) contacts are provided by Asn244, Asp246, Pro248, and Glu249. Glu249 contributes to the Mg(2+) binding site. Residue Asn269 is glycosylated (N-linked (GlcNAc...) asparagine). A CX3CL1-binding region spans residues 295–314 (LPNDGQCHLENNMYTMSHYY). A Ca(2+)-binding site is contributed by Ala362. 3 N-linked (GlcNAc...) asparagine glycosylation sites follow: Asn363, Asn406, and Asn417. Residues 383 to 465 (ILENSKLSEG…VILQYICECE (83 aa)) are interaction with TMEM182. I-EGF domains are found at residues 466–501 (CQSEGIPESPKCHEGNGTFECGACRCNEGRVGRHCE), 502–554 (CSTD…KFCE), 555–591 (CDNFNCDRSNGLICGGNGVCKCRVCECNPNYTGSACD), and 592–631 (CSLDTSTCEASNGQICNGRGICECGVCKCTDPKFQGQTCE). A glycan (N-linked (GlcNAc...) asparagine) is linked at Asn481. An N-linked (GlcNAc...) asparagine glycan is attached at Asn520. Asn584 carries N-linked (GlcNAc...) asparagine glycosylation. Asn669 carries N-linked (GlcNAc...) asparagine glycosylation. The helical transmembrane segment at 729 to 749 (IIPIVAGVVAGIVLIGLALLL) threads the bilayer. A signal for sorting from recycling endosomes; interaction with ACAP1 region spans residues 762-767 (EFAKFE). A Phosphothreonine modification is found at Thr777. A Phosphotyrosine modification is found at Tyr783. Phosphoserine is present on Ser785. Residues 785 to 792 (SAVTTVVN) form an interaction with ITGB1BP1 region. Thr789 bears the Phosphothreonine mark. At Lys794 the chain carries N6-acetyllysine; alternate. Lys794 is covalently cross-linked (Glycyl lysine isopeptide (Lys-Gly) (interchain with G-Cter in SUMO1); alternate).

This sequence belongs to the integrin beta chain family. As to quaternary structure, interacts with seprase FAP (seprase); the interaction occurs at the cell surface of invadopodia membrane in a collagen-dependent manner. Heterodimer of an alpha and a beta subunit. Beta-1 associates with either alpha-1, alpha-2, alpha-3, alpha-4, alpha-5, alpha-6, alpha-7, alpha-8, alpha-9, alpha-10, alpha-11 or alpha-V. ITGA6:ITGB1 is found in a complex with CD9; interaction takes place in oocytes and is involved in sperm-egg fusion. Binds LGALS3BP and NMRK2, when associated with alpha-7, but not with alpha-5. Interacts with FLNA, FLNB, FLNC and RANBP9. Interacts with KRT1 in the presence of RACK1 and SRC. Interacts with JAML; integrin alpha-4/beta-1 may regulate leukocyte to endothelial cells adhesion by controlling JAML homodimerization. Interacts with RAB21. Interacts (via the cytoplasmic region) with RAB25 (via the hypervariable C-terminal region). Interacts with MYO10. Interacts with ITGB1BP1 (via C-terminal region); the interaction is a prerequisite for focal adhesion disassembly. Interacts with TLN1; the interaction is prevented by competitive binding of ITGB1BP1. Interacts with ACAP1; required for ITGB1 recycling. Interacts with ASAP3. Interacts with FERMT2; the interaction is inhibited in presence of ITGB1BP1. Interacts with DAB2. Interacts with FGR and HCK. Interacts with alpha-7A and alpha-7B in adult skeletal muscle. Interacts with alpha-7B in cardiomyocytes of adult heart. Interacts with EMP2; the interaction may be direct or indirect and ITGB1 has a heterodimer form. ITGA5:ITGB1 interacts with CCN3. ITGA4:ITGB1 is found in a ternary complex with CX3CR1 and CX3CL1. ITGA5:ITGB1 interacts with FBN1. ITGA5:ITGB1 acts as a receptor for fibronectin FN1 and mediates R-G-D-dependent cell adhesion to FN1. ITGA5:ITGB1 interacts with IL1B. Interacts with MDK. ITGA4:ITGB1 interacts with MDK; this interaction mediates MDK-induced osteoblast cells migration through PXN phosphorylation. ITGA6:ITGB1 interacts with MDK; this interaction mediates MDK-induced neurite-outgrowth. ITGA5:ITGB1 interacts with ACE2. Interacts with TMEM182 and LAMB1. Interacts with tensin TNS3; TNS3 also interacts with PEAK1, thus acting as an adapter molecule to bridge the association of PEAK1 with ITGB1. Interacts with tensin TNS4; the interaction displaces tensin TNS3 from the ITGB1 cytoplasmic tail and promotes ITGB1 stability. Integrin ITGA9:ITGB1 interacts with SPP1/OPN (via N-terminus). Integrin ITGA9:ITGB1 interacts with TNC/TNFN3 (via the 3rd Fibronectin type-III domain). Integrins ITGA4:ITGB1 and ITGA9:ITGB1 interact with SVEP1 (via Sushi domain 21); thereby inhibit Ca(2+) intracellular signaling and as a result repress vasocontraction. ITGA4:ITGB1 and ITGA5:ITGB1 interacts with SELP. Interacts with CD248. ITGA5:ITGB1 interacts with IGFBP1. ITGA4:ITGB1 interacts with BCAM. Interacts with ADGRG6.

Its subcellular location is the cell membrane. It is found in the cell projection. It localises to the invadopodium membrane. The protein resides in the ruffle membrane. The protein localises to the recycling endosome. Its subcellular location is the melanosome. It is found in the lamellipodium. It localises to the ruffle. The protein resides in the cell junction. The protein localises to the focal adhesion. Functionally, integrins alpha-1/beta-1, alpha-2/beta-1, alpha-10/beta-1 and alpha-11/beta-1 are receptors for collagen. Integrins alpha-1/beta-1 and alpha-2/beta-2 recognize the proline-hydroxylated sequence G-F-P-G-E-R in collagen. Integrins alpha-2/beta-1, alpha-3/beta-1, alpha-4/beta-1, alpha-5/beta-1, alpha-8/beta-1, alpha-10/beta-1, alpha-11/beta-1 and alpha-V/beta-1 are receptors for fibronectin. Alpha-4/beta-1 recognizes one or more domains within the alternatively spliced CS-1 and CS-5 regions of fibronectin. Integrin alpha-5/beta-1 is a receptor for fibrinogen. Integrin alpha-1/beta-1, alpha-2/beta-1, alpha-6/beta-1 and alpha-7/beta-1 are receptors for lamimin. Integrin alpha-6/beta-1 (ITGA6:ITGB1) is present in oocytes and is involved in sperm-egg fusion. Integrin alpha-4/beta-1 is a receptor for VCAM1 and recognizes the sequence Q-I-D-S in VCAM1. Integrin alpha-9/beta-1 is a receptor for VCAM1, cytotactin and osteopontin. It recognizes the sequence A-E-I-D-G-I-E-L in cytotactin. Integrin alpha-3/beta-1 is a receptor for epiligrin, thrombospondin and CSPG4. Integrin alpha-3/beta-1 provides a docking site for FAP (seprase) at invadopodia plasma membranes in a collagen-dependent manner and hence may participate in the adhesion, formation of invadopodia and matrix degradation processes, promoting cell invasion. Alpha-3/beta-1 may mediate with LGALS3 the stimulation by CSPG4 of endothelial cells migration. Integrin alpha-V/beta-1 is a receptor for vitronectin. Beta-1 integrins recognize the sequence R-G-D in a wide array of ligands. When associated with alpha-7/beta-1 integrin, regulates cell adhesion and laminin matrix deposition. Involved in promoting endothelial cell motility and angiogenesis. Involved in osteoblast compaction through the fibronectin fibrillogenesis cell-mediated matrix assembly process and the formation of mineralized bone nodules. May be involved in up-regulation of the activity of kinases such as PKC via binding to KRT1. Together with KRT1 and RACK1, serves as a platform for SRC activation or inactivation. Plays a mechanistic adhesive role during telophase, required for the successful completion of cytokinesis. ITGA4:ITGB1 binds to fractalkine (CX3CL1) and may act as its coreceptor in CX3CR1-dependent fractalkine signaling. ITGA4:ITGB1 and ITGA5:ITGB1 bind to PLA2G2A via a site (site 2) which is distinct from the classical ligand-binding site (site 1) and this induces integrin conformational changes and enhanced ligand binding to site 1. ITGA5:ITGB1 acts as a receptor for fibrillin-1 (FBN1) and mediates R-G-D-dependent cell adhesion to FBN1. ITGA5:ITGB1 is a receptor for IL1B and binding is essential for IL1B signaling. ITGA5:ITGB3 is a receptor for soluble CD40LG and is required for CD40/CD40LG signaling. Plays an important role in myoblast differentiation and fusion during skeletal myogenesis. ITGA9:ITGB1 may play a crucial role in SVEP1/polydom-mediated myoblast cell adhesion. Integrins ITGA9:ITGB1 and ITGA4:ITGB1 repress PRKCA-mediated L-type voltage-gated channel Ca(2+) influx and ROCK-mediated calcium sensitivity in vascular smooth muscle cells via their interaction with SVEP1, thereby inhibit vasocontraction. The polypeptide is Integrin beta-1 (ITGB1) (Pongo abelii (Sumatran orangutan)).